The sequence spans 209 residues: Flavin prenyltransferase UbiX (209 aa).

FMN contacts are provided by residues 13-15 (GAS), Ser-39, 104-107 (STGT), Cys-116, and Arg-139. Positions 169 and 185 each coordinate dimethylallyl phosphate.

This sequence belongs to the UbiX/PAD1 family.

The enzyme catalyses dimethylallyl phosphate + FMNH2 = prenylated FMNH2 + phosphate. Flavin prenyltransferase that catalyzes the synthesis of the prenylated FMN cofactor (prenyl-FMN) for 4-hydroxy-3-polyprenylbenzoic acid decarboxylase UbiD. The prenyltransferase is metal-independent and links a dimethylallyl moiety from dimethylallyl monophosphate (DMAP) to the flavin N5 and C6 atoms of FMN. The chain is Flavin prenyltransferase UbiX from Pseudomonas aeruginosa (strain ATCC 15692 / DSM 22644 / CIP 104116 / JCM 14847 / LMG 12228 / 1C / PRS 101 / PAO1).